Consider the following 193-residue polypeptide: MYGAVLPGLFFIFISCVVASSNDVKDGGADRGAHSDRGGMWFGPRIGKRSLRMATEDNRQAFFKLLEAADALKYYYDQLPYEMQADEPEARVTKKVIFTPKLGRSLSYEDKMFDNVEFTPRLGRRLADDTPATPADQEMYRPDPEQIDSRTKYFSPRLGRTMNFSPRLGRELAYEMLPSKVRVVRSTNKTQST.

An N-terminal signal peptide occupies residues 1 to 19 (MYGAVLPGLFFIFISCVVA). An Isoleucine amide modification is found at isoleucine 46. Leucine 102 and leucine 122 each carry leucine amide. Positions 124 to 158 (RRLADDTPATPADQEMYRPDPEQIDSRTKYFSPRL) are disordered. Basic and acidic residues predominate over residues 138–151 (EMYRPDPEQIDSRT). Leucine 158 and leucine 168 each carry leucine amide. Positions 186–193 (STNKTQST) are excised as a propeptide.

Belongs to the pyrokinin family. As to expression, expressed in the mandibular, maxillary and labial neuromeres of the male and female brain-subesophageal ganglions, in the corpora cardiaca and all around the corpora allata, and at a lower level in the brain near the calyx and pedunculus of the mushroom body (at protein level). Expressed in larvae and adult of both sexes (at protein level). In terms of tissue distribution, expressed in corpora cardiaca (CC), corpora allata (CA) and gnathal ganglion (GNG) (at protein level). Expression in CC and CA detected in most animals, in GNG in some (at protein level). Expression not detected in CC, CA, AL or GNG (at protein level). As to expression, expressed in corpora cardiaca (CC), corpora allata (CA), antennal lobe (AL) and gnathal ganglion (GNG) (at protein level). Expression in CC, CA and GNG detected in most animals, expression in AL detected in few (at protein level). In terms of tissue distribution, expressed in corpora cardiaca (CC), corpora allata (CA), antennal lobe (AL) and gnathal ganglion (GNG) (at protein level). Expression in CC, CA and GNG detected in all animals, expression in AL detected in some (at protein level). Expressed in corpora cardiaca (CC), corpora allata (CA), antennal lobe (AL) and gnathal ganglion (GNG) (at protein level). Expression in CC, CA and GNG detected in most animals, expression in AL detected in some animals (at protein level).

It localises to the secreted. In terms of biological role, a hormone that controls sex pheromone production in female moths and pheromone responsiveness in male. This is PBAN-type neuropeptides from Agrotis ipsilon (Black cutworm moth).